Reading from the N-terminus, the 271-residue chain is Tritrans,polycis-undecaprenyl-diphosphate synthase (geranylgeranyl-diphosphate specific) (271 aa).

The active site involves Asp-50. A Mg(2+)-binding site is contributed by Asp-50. Substrate contacts are provided by residues 51-54 (GNRR), Phe-55, His-67, and 95-97 (STE). Catalysis depends on Asn-98, which acts as the Proton acceptor. Substrate contacts are provided by residues Arg-101, Arg-220, and 226 to 228 (RLS). A Mg(2+)-binding site is contributed by Glu-239.

The protein belongs to the UPP synthase family. In terms of assembly, homodimer. Mg(2+) serves as cofactor.

The catalysed reaction is geranylgeranyl diphosphate + 7 isopentenyl diphosphate = tri-trans,hepta-cis-undecaprenyl diphosphate + 7 diphosphate. Functionally, catalyzes the sequential condensation of isopentenyl diphosphate (IPP) with geranylgeranyl diphosphate (GGPP) to yield (2Z,6Z,10Z,14Z,18Z,22Z,26Z,30E,34E,38E)-undecaprenyl diphosphate (tritrans,heptacis-UPP). It is probably the precursor of glycosyl carrier lipids. The sequence is that of Tritrans,polycis-undecaprenyl-diphosphate synthase (geranylgeranyl-diphosphate specific) from Methanopyrus kandleri (strain AV19 / DSM 6324 / JCM 9639 / NBRC 100938).